We begin with the raw amino-acid sequence, 624 residues long: DNA damage response protein Mdb1 (624 aa).

3 disordered regions span residues 177–237 (ERIP…DDES), 249–386 (GETK…KNKH), and 591–624 (IGKR…EQRT). Basic and acidic residues-rich tracts occupy residues 200–217 (DEKL…HSSD) and 225–235 (EDQKQLNKTDD). Positions 250-263 (ETKSPSSVSQSLSG) are enriched in polar residues. 2 positions are modified to phosphoserine: S253 and S283. Positions 294-305 (NISDSSIKNNSI) are enriched in low complexity. 2 stretches are compositionally biased toward basic and acidic residues: residues 306 to 316 (HSDEVNPEVRP) and 325 to 352 (EESK…REAE). Positions 356–386 (ISTNYSFPSSSLEDQPDKNVQSSAVENKNKH) are enriched in polar residues. A BRCT domain is found at 376-468 (QSSAVENKNK…KVLDFRSYKY (93 aa)).

Homodimer. Interacts (via BRCT domain) with hta1 peptide containing the S/T-Q motif in vitro; this interaction requires phosphorylation of the hta1 peptide at the S/T-Q motif.

The protein localises to the nucleus. It is found in the chromosome. Its subcellular location is the cytoplasm. The protein resides in the cytoskeleton. It localises to the spindle. In terms of biological role, involved in DNA damage response (DDR) mediated through its interaction with phosphorylated H2A proteins hta1 and hta2 which mark the discrete foci of DNA damage. The protein is DNA damage response protein Mdb1 of Schizosaccharomyces pombe (strain 972 / ATCC 24843) (Fission yeast).